The sequence spans 388 residues: 1-deoxy-D-xylulose 5-phosphate reductoisomerase (388 aa).

Residues Thr15, Gly16, Ser17, Ile18, and Asn127 each contribute to the NADPH site. A 1-deoxy-D-xylulose 5-phosphate-binding site is contributed by Lys128. Residue Glu129 participates in NADPH binding. Asp153 contacts Mn(2+). The 1-deoxy-D-xylulose 5-phosphate site is built by Ser154, Glu155, Ser179, and His202. Residue Glu155 coordinates Mn(2+). An NADPH-binding site is contributed by Gly208. 1-deoxy-D-xylulose 5-phosphate contacts are provided by Ser215, Asn220, Lys221, and Glu224. Glu224 contacts Mn(2+).

It belongs to the DXR family. The cofactor is Mg(2+). Requires Mn(2+) as cofactor.

The catalysed reaction is 2-C-methyl-D-erythritol 4-phosphate + NADP(+) = 1-deoxy-D-xylulose 5-phosphate + NADPH + H(+). Its pathway is isoprenoid biosynthesis; isopentenyl diphosphate biosynthesis via DXP pathway; isopentenyl diphosphate from 1-deoxy-D-xylulose 5-phosphate: step 1/6. In terms of biological role, catalyzes the NADPH-dependent rearrangement and reduction of 1-deoxy-D-xylulose-5-phosphate (DXP) to 2-C-methyl-D-erythritol 4-phosphate (MEP). This Bacteroides fragilis (strain YCH46) protein is 1-deoxy-D-xylulose 5-phosphate reductoisomerase.